The primary structure comprises 108 residues: FK506-binding protein 1 (108 aa).

A PPIase FKBP-type domain is found at 20-108; it reads GDNVTIHYVG…KFEVELLKVN (89 aa).

Belongs to the FKBP-type PPIase family. FKBP1 subfamily.

It localises to the cytoplasm. The catalysed reaction is [protein]-peptidylproline (omega=180) = [protein]-peptidylproline (omega=0). Its activity is regulated as follows. Inhibited by both FK506 and rapamycin. Functionally, PPIases accelerate the folding of proteins. It catalyzes the cis-trans isomerization of proline imidic peptide bonds in oligopeptides. This chain is FK506-binding protein 1 (FRR1), found in Cryptococcus neoformans var. grubii serotype A (strain H99 / ATCC 208821 / CBS 10515 / FGSC 9487) (Filobasidiella neoformans var. grubii).